Reading from the N-terminus, the 422-residue chain is NADH-quinone oxidoreductase subunit F (422 aa).

Residues 1–26 (MLKEEDKIFTNLHGQQSHDLKSSKKR) are disordered. Residues 16-26 (QSHDLKSSKKR) show a composition bias toward basic and acidic residues. 54-63 (GRGGAGFSTG) contacts NAD(+). Residue 166-213 (GAGAYICGEETALLESLEGKKGMPRLKPPFPAGFGLYGCPTTINNVES) coordinates FMN. The [4Fe-4S] cluster site is built by cysteine 344, cysteine 347, cysteine 350, and cysteine 390.

Belongs to the complex I 51 kDa subunit family. FMN serves as cofactor. The cofactor is [4Fe-4S] cluster.

It carries out the reaction a quinone + NADH + 5 H(+)(in) = a quinol + NAD(+) + 4 H(+)(out). Functionally, NDH-1 shuttles electrons from NADH, via FMN and iron-sulfur (Fe-S) centers, to quinones in the respiratory chain. Couples the redox reaction to proton translocation (for every two electrons transferred, four hydrogen ions are translocated across the cytoplasmic membrane), and thus conserves the redox energy in a proton gradient. The protein is NADH-quinone oxidoreductase subunit F (nuoF) of Rickettsia felis (strain ATCC VR-1525 / URRWXCal2) (Rickettsia azadi).